Here is a 2723-residue protein sequence, read N- to C-terminus: Zinc finger protein 292 (2723 aa).

The C2H2-type 1 zinc finger occupies 569 to 591 (YSCPICAKNFNSKETFVPHVTLH). A disordered region spans residues 608–633 (RLGRPPKITTTNENQKTNTVAKQEQR). The span at 615 to 629 (ITTTNENQKTNTVAK) shows a compositional bias: polar residues. At Ser654 the chain carries Phosphoserine. 5 consecutive C2H2-type zinc fingers follow at residues 681–705 (FNCP…VKGH), 722–744 (VICQ…LQMH), 750–774 (YICI…RKEH), 779–803 (AKCM…EAQH), and 807–831 (YTCK…LDDH). Basic and acidic residues predominate over residues 825-834 (EKHLDDHSTP). Residues 825–860 (EKHLDDHSTPPEKVLPPEAQLNSSGDSIQPSEVNQN) form a disordered region. Over residues 844–860 (QLNSSGDSIQPSEVNQN) the composition is skewed to polar residues. The C2H2-type 7 zinc-finger motif lies at 1098-1123 (FSCQVEGCTRTYNSSQSIGKHMKTAH). N6-acetyllysine is present on Lys1117. At Ser1159 the chain carries Phosphoserine. The interval 1331–1364 (SSTNAQQSAPEKVKKDRGRGPNGKERKPKHNKRA) is disordered. The span at 1341–1355 (EKVKKDRGRGPNGKE) shows a compositional bias: basic and acidic residues. Residues 1375 to 1397 (FICSRCYRAFTNPRSLGGHLSKR) form a C2H2-type 8; degenerate zinc finger. Polar residues predominate over residues 1588–1627 (SFPNSGGPSQNFTSNSSRVSVISGPQNTRSSHLNKKGNSA). The segment at 1588-1634 (SFPNSGGPSQNFTSNSSRVSVISGPQNTRSSHLNKKGNSASKRRKKV) is disordered. Residues 1827–1854 (QSEVSHKEDQIQEILEGLQKLKLENDLS) are a coiled coil. 2 C2H2-type zinc fingers span residues 1902-1927 (FVCQ…GKIH) and 1947-1972 (FKCV…QLVH). Positions 1986-2023 (RPYGRKSQSENVPASRSTQVKKQLAMTEENKKESQPAL) are disordered. Positions 1994 to 2006 (SENVPASRSTQVK) are enriched in polar residues. N6-acetyllysine is present on Lys2042. The tract at residues 2074–2103 (NTQTKGRKIRRHKKEKEEKKRKKPVSQSLE) is disordered. The segment covering 2078–2097 (KGRKIRRHKKEKEEKKRKKP) has biased composition (basic residues). 4 consecutive C2H2-type zinc fingers follow at residues 2114–2139 (YRCV…QAVH), 2172–2197 (FRCQ…MKLH), 2216–2241 (FPCD…EADH), and 2256–2281 (YKCD…FNKH). 2 stretches are compositionally biased toward basic residues: residues 2285–2294 (HKAHLIRPRR) and 2312–2322 (KSKHRGTKHSR). The disordered stretch occupies residues 2285–2345 (HKAHLIRPRR…KKKNNLENKN (61 aa)). The C2H2-type 15 zinc finger occupies 2386–2410 (YPCMIKGCTSVVTSESNIIRHYKCH). Residues 2441–2452 (QEGAKNDVKDSD) show a composition bias toward basic and acidic residues. Disordered regions lie at residues 2441-2480 (QEGA…EKDE), 2530-2564 (LKRV…VRKE), and 2606-2631 (QKKN…RKNI). The segment covering 2453-2470 (TCVSESNDNSRTTATVSQ) has biased composition (polar residues). The segment covering 2606-2615 (QKKNTDKDHP) has biased composition (basic and acidic residues).

Belongs to the krueppel C2H2-type zinc-finger protein family.

It is found in the nucleus. Functionally, may be involved in transcriptional regulation. This Homo sapiens (Human) protein is Zinc finger protein 292 (ZNF292).